The following is a 427-amino-acid chain: Trigger factor (427 aa).

The region spanning 163-248 (GDTVVIDFVG…IHEVKTKEVP (86 aa)) is the PPIase FKBP-type domain.

The protein belongs to the FKBP-type PPIase family. Tig subfamily.

It is found in the cytoplasm. The enzyme catalyses [protein]-peptidylproline (omega=180) = [protein]-peptidylproline (omega=0). Its function is as follows. Involved in protein export. Acts as a chaperone by maintaining the newly synthesized protein in an open conformation. Functions as a peptidyl-prolyl cis-trans isomerase. This Streptococcus agalactiae serotype III (strain NEM316) protein is Trigger factor.